Consider the following 291-residue polypeptide: Feruloyl esterase B (291 aa).

The first 18 residues, 1–18, serve as a signal peptide directing secretion; that stretch reads MLVRSFLGFAVLAATCLA. The N-linked (GlcNAc...) asparagine glycan is linked to Asn-117. The active-site Charge relay system is Ser-136. Asn-179 is a glycosylation site (N-linked (GlcNAc...) asparagine).

This sequence belongs to the carbohydrate esterase 1 (CE1) family. Feruloyl esterase type B subfamily.

The protein localises to the secreted. The enzyme catalyses feruloyl-polysaccharide + H2O = ferulate + polysaccharide.. Functionally, feruloyl esterase which acts in synergy with xylanases in degradation of plant cell walls. Hydrolyzes the ester linkage of hydroxycinnamic acids (ferulic acid (FA) and p-coumaric acid) and diferulates present in plant cell walls. Is active on substrates containing ferulic acid ester linked to the C-5 and C-2 linkages of arabinofuranose, while it was found capable of de-esterifying acetylated glucuronoxylans. Efficiently releases ferulic acid (FA) from destarched wheat bran when incubated with an M3 xylanase. The sequence is that of Feruloyl esterase B (Fae1a) from Thermothelomyces thermophilus (strain ATCC 42464 / BCRC 31852 / DSM 1799) (Sporotrichum thermophile).